A 265-amino-acid chain; its full sequence is Polyglutamine-binding protein 1 (265 aa).

One can recognise a WW domain in the interval 46–80 (EGLPPSWYKVFDPSCGLPYYWNADTDLVSWLSPHD). S94 is modified (phosphoserine). The interval 94–265 (SSNADAEEKL…AEASRTKQQD (172 aa)) is disordered. Basic and acidic residues predominate over residues 99–175 (AEEKLDRSHD…DKADREEGKE (77 aa)). Tandem repeats lie at residues 104 to 110 (DRSHDKS), 111 to 117 (DRGHDKS), 118 to 124 (DRSHEKL), 125 to 131 (DRGHDKS), 132 to 138 (DRGHDKS), 139 to 140 (DR), 141 to 142 (DR), 143 to 144 (ER), 150 to 151 (DR), 152 to 153 (ER), 154 to 155 (ER), 156 to 157 (DR), 158 to 159 (ER), 160 to 161 (DR), and 162 to 163 (DR). The interval 104-138 (DRSHDKSDRGHDKSDRSHEKLDRGHDKSDRGHDKS) is 5 X 7 AA approximate tandem repeats of D-R-[SG]-H-D-K-S. A 3 X 2 AA tandem repeats of [DE]-R region spans residues 139–144 (DRDRER). The interval 150 to 163 (DRERERDRERDRDR) is 7 X 2 AA tandem repeats of [DE]-R. The segment at 245–255 (YPSPGAVLRAN) is important for interaction with TXNL4A. A Phosphoserine modification is found at S247.

Interacts with POU3F2/Brn-2, ATXN1, TXNL4A, HTT and AR. Interaction with ATXN1 correlates positively with the length of the polyglutamine tract. Interacts with RNA polymerase II large subunit in a phosphorylation-dependent manner. Forms a ternary complex with ATXN1 mutant and phosphorylated RNA polymerase II. Interacts (via C-terminus) with TXNL4A and CD2BP2. Interacts (via WW domain) with ATN1 and SF3B1, and may interact with additional splice factors. Interacts (via WW domain) with WBP11; Leading to reduce interaction between PQBP1 and TXNL4A. Interacts with CAPRIN1. Interacts with DDX1. Interacts with SFPQ. Interacts with KHSRP.

Its subcellular location is the nucleus. It localises to the nucleus speckle. The protein localises to the cytoplasmic granule. Functionally, intrinsically disordered protein that acts as a scaffold, and which is involved in different processes, such as pre-mRNA splicing, transcription regulation, innate immunity and neuron development. Interacts with splicing-related factors via the intrinsically disordered region and regulates alternative splicing of target pre-mRNA species. May suppress the ability of POU3F2 to transactivate the DRD1 gene in a POU3F2 dependent manner. Can activate transcription directly or via association with the transcription machinery. May be involved in ATXN1 mutant-induced cell death. The interaction with ATXN1 mutant reduces levels of phosphorylated RNA polymerase II large subunit. Involved in the assembly of cytoplasmic stress granule, possibly by participating in the transport of neuronal RNA granules. Also acts as an innate immune sensor of infection by retroviruses, by detecting the presence of reverse-transcribed DNA in the cytosol. Directly binds retroviral reverse-transcribed DNA in the cytosol and interacts with CGAS, leading to activate the cGAS-STING signaling pathway, triggering type-I interferon production. The chain is Polyglutamine-binding protein 1 (PQBP1) from Gorilla gorilla gorilla (Western lowland gorilla).